The sequence spans 321 residues: Nucleus-vacuole junction protein 1 (321 aa).

The N-terminal stretch at 1–22 (MTRPPLVRGIFSLGLSVAVLKG) is a signal peptide. The interval 73–125 (ELSWRKVFNFISRQSSELDARIYVLILLLSFLLPIAWTVLDGDRETTLEDKDN) is TSC13-binding. Residues 94–114 (IYVLILLLSFLLPIAWTVLDG) traverse the membrane as a helical segment. Positions 139–195 (KHYNDGERAVLQFGKNRSEPIILSYKDMNVLEGEHEFTSKEEHSNSHLTSKSENALS) are OSH1-binding. Position 156 is a phosphoserine (S156). Over residues 174 to 183 (EFTSKEEHSN) the composition is skewed to basic and acidic residues. The segment at 174–194 (EFTSKEEHSNSHLTSKSENAL) is disordered. Residues 184 to 194 (SHLTSKSENAL) show a composition bias toward polar residues. Position 199 is a phosphoserine (S199). Residues 210–275 (QLEEDKNEPN…SLKSSTSFPI (66 aa)) form a disordered region. A VAC8-binding region spans residues 233–321 (DCSSSSEVES…EQAYSQPFRY (89 aa)). Over residues 242–262 (SQSKCRKESTAEPDSLSRDTR) the composition is skewed to basic and acidic residues. The span at 263 to 272 (TTSSLKSSTS) shows a compositional bias: low complexity. Phosphoserine is present on residues S285 and S298. Residues 299-321 (PTKSSNLDAQVNTEQAYSQPFRY) are disordered.

As to quaternary structure, interacts with OSH1, TSC13 and VAC8.

Its subcellular location is the nucleus outer membrane. Its function is as follows. Involved in the formation of nucleus-vacuole (NV) junctions during piecemeal microautophagy of the nucleus (PMN). NV junctions are interorganelle interfaces mediated by NVJ1 in the nuclear envelope and VAC8 on the vacuole membrane. Together, NVJ1 and VAC8 form Velcro-like patches through which teardrop-like portions of the nucleus are pinched off into the vacuolar lumen and degraded by the PMN process. Also acts as an outer-nuclear membrane receptor for OSH1 and TSC13. This is Nucleus-vacuole junction protein 1 (NVJ1) from Saccharomyces cerevisiae (strain YJM789) (Baker's yeast).